The primary structure comprises 303 residues: Phosphoglycerate mutase 3 (303 aa).

Substrate contacts are provided by residues 13 to 20 (RHGQSELN), 26 to 27 (CG), Arg-70, 120 to 123 (ERHY), Lys-131, and 147 to 148 (RR). Catalysis depends on His-14, which acts as the Tele-phosphohistidine intermediate. Glu-120 (proton donor/acceptor) is an active-site residue. The tract at residues 168–198 (NDQGSSTGYDFKEPNRHLKYGPEEKANERLP) is disordered. Over residues 177-198 (DFKEPNRHLKYGPEEKANERLP) the composition is skewed to basic and acidic residues. A substrate-binding site is contributed by 236-237 (GS).

The protein belongs to the phosphoglycerate mutase family. BPG-dependent PGAM subfamily.

It carries out the reaction (2R)-2-phosphoglycerate = (2R)-3-phosphoglycerate. Its pathway is carbohydrate degradation; glycolysis; pyruvate from D-glyceraldehyde 3-phosphate: step 3/5. Its function is as follows. Could be non-functional. The chain is Phosphoglycerate mutase 3 (GPM3) from Saccharomyces cerevisiae (strain ATCC 204508 / S288c) (Baker's yeast).